A 524-amino-acid chain; its full sequence is Zinc finger protein 346 (524 aa).

Matrin-type zinc fingers lie at residues 34 to 64, 92 to 126, 162 to 192, 226 to 260, 286 to 316, 343 to 373, and 400 to 430; these read TQCK…KVRR, DRSK…LRLR, KFCK…QETK, GKGF…LMSM, FSCD…HLKS, FSCD…HLMS, and FSCD…QLMS. Zn(2+) is bound by residues Cys36, Cys39, His52, His58, Cys97, Cys100, His113, and His119. Disordered stretches follow at residues 453–486 and 494–513; these read SAGG…GSLP and PLYP…TMSP. Positions 476-486 are enriched in low complexity; sequence PKGPSSFGSLP.

The protein localises to the nucleus. It is found in the cytoplasm. Its function is as follows. Binds preferentially to dsRNA, but also to RNA-DNA hybrids. The polypeptide is Zinc finger protein 346 (Xenopus laevis (African clawed frog)).